The primary structure comprises 161 residues: Eukaryotic translation initiation factor 5A-1 (161 aa).

Lysine 54 is modified (hypusine).

Belongs to the eIF-5A family. Post-translationally, lys-54 undergoes hypusination, a unique post-translational modification that consists in the addition of a butylamino group from spermidine to lysine side chain, leading to the formation of the unusual amino acid hypusine. eIF-5As are the only known proteins to undergo this modification, which is essential for their function. As to expression, expressed specifically in the germline in the distal region of gonads where germ cells actively proliferate.

It is found in the cytoplasm. Translation factor that promotes translation elongation and termination, particularly upon ribosome stalling at specific amino acid sequence contexts. Binds between the exit (E) and peptidyl (P) site of the ribosome and promotes rescue of stalled ribosome: specifically required for efficient translation of polyproline-containing peptides as well as other motifs that stall the ribosome. Acts as a ribosome quality control (RQC) cofactor by joining the RQC complex to facilitate peptidyl transfer during CAT tailing step. Required for mitotic germ cell proliferation, gametogenesis after entry into meiosis, and localization of the P granule component pgl-1 on P granules. The sequence is that of Eukaryotic translation initiation factor 5A-1 (iff-1) from Caenorhabditis elegans.